The sequence spans 152 residues: Protein SprT-like (152 aa).

Residues 7 to 148 form the SprT-like domain; the sequence is QRLVEEVSLQ…GKCKGKLILI (142 aa). His-67 is a Zn(2+) binding site. The active site involves Glu-68. His-71 is a binding site for Zn(2+).

The protein belongs to the SprT family. Zn(2+) serves as cofactor.

It localises to the cytoplasm. In Bacillus thuringiensis subsp. konkukian (strain 97-27), this protein is Protein SprT-like.